The following is a 121-amino-acid chain: uncharacterized protein (121 aa).

Residues 101–121 (TVVKKEDVRESPVDTFMENAT) form a disordered region. The segment covering 102–112 (VVKKEDVRESP) has biased composition (basic and acidic residues).

This is an uncharacterized protein from Schizosaccharomyces pombe (strain 972 / ATCC 24843) (Fission yeast).